Here is a 211-residue protein sequence, read N- to C-terminus: MYQPEFPPVPFRLGLYPVVDSVQWIERLLDAGVRTLQLRIKDQRDEEVEADVVAAIALGRRYNARLFINDYWRLAIKHQAYGVHLGQEDLQATDLSTIRAAGLRLGVSTHDDMEIDVALAARPSYIALGHVFPTQTKQMPSAPQGLEQLARHVERLADYPTVAIGGISLARAPAVIATGVGSIAVVSAITQAADWRLATAQLLEIAGVGDE.

4-amino-2-methyl-5-(diphosphooxymethyl)pyrimidine contacts are provided by residues 37-41 and asparagine 69; that span reads QLRIK. Mg(2+)-binding residues include aspartate 70 and aspartate 89. 4-amino-2-methyl-5-(diphosphooxymethyl)pyrimidine is bound at residue serine 108. 134-136 contacts 2-[(2R,5Z)-2-carboxy-4-methylthiazol-5(2H)-ylidene]ethyl phosphate; the sequence is TQT. Lysine 137 provides a ligand contact to 4-amino-2-methyl-5-(diphosphooxymethyl)pyrimidine. Residues glycine 166 and 186 to 187 contribute to the 2-[(2R,5Z)-2-carboxy-4-methylthiazol-5(2H)-ylidene]ethyl phosphate site; that span reads VS.

It belongs to the thiamine-phosphate synthase family. Mg(2+) serves as cofactor.

The catalysed reaction is 2-[(2R,5Z)-2-carboxy-4-methylthiazol-5(2H)-ylidene]ethyl phosphate + 4-amino-2-methyl-5-(diphosphooxymethyl)pyrimidine + 2 H(+) = thiamine phosphate + CO2 + diphosphate. It carries out the reaction 2-(2-carboxy-4-methylthiazol-5-yl)ethyl phosphate + 4-amino-2-methyl-5-(diphosphooxymethyl)pyrimidine + 2 H(+) = thiamine phosphate + CO2 + diphosphate. The enzyme catalyses 4-methyl-5-(2-phosphooxyethyl)-thiazole + 4-amino-2-methyl-5-(diphosphooxymethyl)pyrimidine + H(+) = thiamine phosphate + diphosphate. It participates in cofactor biosynthesis; thiamine diphosphate biosynthesis; thiamine phosphate from 4-amino-2-methyl-5-diphosphomethylpyrimidine and 4-methyl-5-(2-phosphoethyl)-thiazole: step 1/1. Functionally, condenses 4-methyl-5-(beta-hydroxyethyl)thiazole monophosphate (THZ-P) and 2-methyl-4-amino-5-hydroxymethyl pyrimidine pyrophosphate (HMP-PP) to form thiamine monophosphate (TMP). This chain is Thiamine-phosphate synthase, found in Escherichia coli O6:H1 (strain CFT073 / ATCC 700928 / UPEC).